Here is a 381-residue protein sequence, read N- to C-terminus: Probable tRNA sulfurtransferase (381 aa).

The THUMP domain occupies 55–163 (GECLENLNKV…DDEAFIYHEK (109 aa)). ATP contacts are provided by residues 181–182 (LV), Lys-265, Gly-287, and Gln-296.

The protein belongs to the ThiI family.

Its subcellular location is the cytoplasm. It catalyses the reaction [ThiI sulfur-carrier protein]-S-sulfanyl-L-cysteine + a uridine in tRNA + 2 reduced [2Fe-2S]-[ferredoxin] + ATP + H(+) = [ThiI sulfur-carrier protein]-L-cysteine + a 4-thiouridine in tRNA + 2 oxidized [2Fe-2S]-[ferredoxin] + AMP + diphosphate. The enzyme catalyses [ThiS sulfur-carrier protein]-C-terminal Gly-Gly-AMP + S-sulfanyl-L-cysteinyl-[cysteine desulfurase] + AH2 = [ThiS sulfur-carrier protein]-C-terminal-Gly-aminoethanethioate + L-cysteinyl-[cysteine desulfurase] + A + AMP + 2 H(+). The protein operates within cofactor biosynthesis; thiamine diphosphate biosynthesis. Functionally, catalyzes the ATP-dependent transfer of a sulfur to tRNA to produce 4-thiouridine in position 8 of tRNAs, which functions as a near-UV photosensor. Also catalyzes the transfer of sulfur to the sulfur carrier protein ThiS, forming ThiS-thiocarboxylate. This is a step in the synthesis of thiazole, in the thiamine biosynthesis pathway. The sulfur is donated as persulfide by IscS. This chain is Probable tRNA sulfurtransferase, found in Methanobrevibacter smithii (strain ATCC 35061 / DSM 861 / OCM 144 / PS).